We begin with the raw amino-acid sequence, 357 residues long: uncharacterized protein (357 aa).

Serine 72 carries the phosphoserine modification. Disordered stretches follow at residues 79 to 98 (GVNEDHYTGGGSSNNNRPSR), 264 to 290 (QKQLQGNSKPVKNLPNSNAKQRAGASV), and 323 to 357 (ISDEDEEDEEEDSFQQRSANNRILPAEILSNEPLK). Over residues 324 to 335 (SDEDEEDEEEDS) the composition is skewed to acidic residues.

This is an uncharacterized protein from Saccharomyces cerevisiae (strain ATCC 204508 / S288c) (Baker's yeast).